The following is a 131-amino-acid chain: Large ribosomal subunit protein bL17 (131 aa).

The protein belongs to the bacterial ribosomal protein bL17 family. As to quaternary structure, part of the 50S ribosomal subunit. Contacts protein L32.

This chain is Large ribosomal subunit protein bL17, found in Polynucleobacter necessarius subsp. necessarius (strain STIR1).